A 317-amino-acid polypeptide reads, in one-letter code: Methionyl-tRNA formyltransferase (317 aa).

Serine 110–proline 113 contributes to the (6S)-5,6,7,8-tetrahydrofolate binding site. The disordered stretch occupies residues arginine 292 to asparagine 317.

It belongs to the Fmt family.

It carries out the reaction L-methionyl-tRNA(fMet) + (6R)-10-formyltetrahydrofolate = N-formyl-L-methionyl-tRNA(fMet) + (6S)-5,6,7,8-tetrahydrofolate + H(+). Its function is as follows. Attaches a formyl group to the free amino group of methionyl-tRNA(fMet). The formyl group appears to play a dual role in the initiator identity of N-formylmethionyl-tRNA by promoting its recognition by IF2 and preventing the misappropriation of this tRNA by the elongation apparatus. The protein is Methionyl-tRNA formyltransferase of Bacillus velezensis (strain DSM 23117 / BGSC 10A6 / LMG 26770 / FZB42) (Bacillus amyloliquefaciens subsp. plantarum).